We begin with the raw amino-acid sequence, 267 residues long: Phosphonates import ATP-binding protein PhnC 2 (267 aa).

The ABC transporter domain occupies 3–247 (LSLDGVDLVH…ALDALYANEQ (245 aa)). 36–43 (GPSGAGKT) contacts ATP.

Belongs to the ABC transporter superfamily. Phosphonates importer (TC 3.A.1.9.1) family. The complex is composed of two ATP-binding proteins (PhnC), two transmembrane proteins (PhnE) and a solute-binding protein (PhnD).

It is found in the cell inner membrane. The enzyme catalyses phosphonate(out) + ATP + H2O = phosphonate(in) + ADP + phosphate + H(+). Its function is as follows. Part of the ABC transporter complex PhnCDE involved in phosphonates import. Responsible for energy coupling to the transport system. The polypeptide is Phosphonates import ATP-binding protein PhnC 2 (Pseudomonas aeruginosa (strain UCBPP-PA14)).